Here is a 132-residue protein sequence, read N- to C-terminus: UPF0146 protein PF0123 (132 aa).

The protein belongs to the UPF0146 family.

This is UPF0146 protein PF0123 from Pyrococcus furiosus (strain ATCC 43587 / DSM 3638 / JCM 8422 / Vc1).